The primary structure comprises 166 residues: Salivary acidic proline-rich phosphoprotein 1/2 (166 aa).

A signal peptide spans 1–16; the sequence is MLLILLSVALLAFSSA. Residues 16-166 form a disordered region; it reads AQDLDEDVSQ…QGPPQGQSPQ (151 aa). Gln-17 carries the pyrrolidone carboxylic acid modification. The interval 17 to 46 is inhibits hydroxyapatite formation, binds to hydroxyapatite and calcium; the sequence is QDLDEDVSQEDVPLVISDGGDSEQFIDEER. Ser-24 is subject to Phosphoserine; by FAM20C. Phosphoserine; alternate is present on Ser-33. Ser-33 and Ser-38 each carry an O-linked (GlcA) serine; alternate glycan. The residue at position 38 (Ser-38) is a Phosphoserine; by FAM20C; alternate. Low complexity-rich tracts occupy residues 48–61 and 68–82; these read GPPLGGQQSQPSAG and GPQQGPPQQGGQQQQ. 2 stretches are compositionally biased toward pro residues: residues 83–111 and 137–159; these read GPPPPQGKPQGPPQQGGHPPPPQGRPQGP and GPPPPPPGKPQGPPPQGGRPQGP.

Proteolytically cleaved; PRP-2, PRP-1, PIF-S and Db-S yield PRP-4, PRP-3 (protein A), PIF-F and Db-F, respectively. Post-translationally, a hexuronic acid was shown to be linked to Ser-33 in about 40% of the polypeptides. Neither the structure of the carbohydrate (whether glucuronic acid or an isomer of), nor the linkage (whether a glycoside or an ester) has been definitely established.

The protein resides in the secreted. Its function is as follows. PRP's act as highly potent inhibitors of crystal growth of calcium phosphates. They provide a protective and reparative environment for dental enamel which is important for the integrity of the teeth. The chain is Salivary acidic proline-rich phosphoprotein 1/2 (PRH1) from Homo sapiens (Human).